The chain runs to 321 residues: Probable arabinan endo-1,5-alpha-L-arabinosidase C (321 aa).

A signal peptide spans 1–18 (MYLYTLILLFLASANVNA). Residue Asp33 is the Proton acceptor of the active site. Asn192 carries an N-linked (GlcNAc...) asparagine glycan. Catalysis depends on Glu200, which acts as the Proton donor. N-linked (GlcNAc...) asparagine glycosylation is present at Asn224.

This sequence belongs to the glycosyl hydrolase 43 family.

The protein resides in the secreted. The enzyme catalyses Endohydrolysis of (1-&gt;5)-alpha-arabinofuranosidic linkages in (1-&gt;5)-arabinans.. It functions in the pathway glycan metabolism; L-arabinan degradation. In terms of biological role, endo-1,5-alpha-L-arabinanase involved in degradation of pectin. Its preferred substrate is linear 1,5-alpha-L-arabinan. The chain is Probable arabinan endo-1,5-alpha-L-arabinosidase C (abnC) from Aspergillus fumigatus (strain ATCC MYA-4609 / CBS 101355 / FGSC A1100 / Af293) (Neosartorya fumigata).